The chain runs to 794 residues: Protocadherin beta-6 (794 aa).

Residues 1-27 (MMQTKVQNKKRQVAFFILLMLWGEVGS) form the signal peptide. Residues 28–688 (ESIQYSVLEE…AQADLLTVYL (661 aa)) are Extracellular-facing. 5 Cadherin domains span residues 34-132 (VLEE…APEF), 137-241 (MLLK…VPEF), 246-345 (YEAQ…APEL), 350-449 (FISP…APAF), and 454-559 (YTLF…SPFV). N46 carries N-linked (GlcNAc...) asparagine glycosylation. A disulfide bridge links C95 with C101. N183 is a glycosylation site (N-linked (GlcNAc...) asparagine). N416 carries N-linked (GlcNAc...) asparagine glycosylation. N565 carries N-linked (GlcNAc...) asparagine glycosylation. The Cadherin 6 domain occupies 566-669 (GSAPCTELVP…LVDGFSQPYL (104 aa)). The helical transmembrane segment at 689 to 709 (VVALASVSSLFLFSVLLFVAV) threads the bilayer. Residues 710-794 (RLCRRSRAAS…PTSRNSFPFS (85 aa)) lie on the Cytoplasmic side of the membrane. Residues 773–794 (PPQGTEREMEETPTSRNSFPFS) form a disordered region. Over residues 784–794 (TPTSRNSFPFS) the composition is skewed to polar residues.

In terms of assembly, forms homodimers in trans (molecules expressed by two different cells). Forms promiscuous heterodimers in cis (at the plasma membrane of the same cell) with other protocadherins.

The protein localises to the cell membrane. Functionally, calcium-dependent cell-adhesion protein involved in cells self-recognition and non-self discrimination. Thereby, it is involved in the establishment and maintenance of specific neuronal connections in the brain. The protein is Protocadherin beta-6 of Pan troglodytes (Chimpanzee).